Consider the following 384-residue polypeptide: Class V chitinase CHIT5a (384 aa).

The first 27 residues, 1-27 (MAVQKIIITPILVFLVTIFFNVSSSSS), serve as a signal peptide directing secretion. Asparagine 29, asparagine 114, and asparagine 133 each carry an N-linked (GlcNAc...) asparagine glycan. Residues 39–384 (GVRSAYWPAG…SKQASNAWGH (346 aa)) enclose the GH18 domain. Residue glutamate 152 is the Proton donor of the active site. Residues asparagine 195 and asparagine 234 are each glycosylated (N-linked (GlcNAc...) asparagine).

Belongs to the glycosyl hydrolase 18 family. Chitinase class V subfamily.

The enzyme catalyses Random endo-hydrolysis of N-acetyl-beta-D-glucosaminide (1-&gt;4)-beta-linkages in chitin and chitodextrins.. It functions in the pathway glycan degradation; chitin degradation. Functionally, possesses chitinase activity in vitro toward glycol chitin, carboxymethyl-chitin, colloidal chitin, and the chitin oligosaccharides (N-acetylglucosamine) (GlcNAc)6 and (GlcNAc)5. Hydrolyzes (GlcNAc)6 into (GlcNAc)4 and (GlcNAc)2, or two (GlcNAc)3 molecules. Has the capacity to inhibit hyphal growth of the fungus Trichoderma viride in an agar-plate bioassay. In Medicago truncatula (Barrel medic), this protein is Class V chitinase CHIT5a.